The following is a 243-amino-acid chain: MEGNFFIRSDAQRAHDNGFIAKQKPNLTTAPTAGQANESGCFDCNICLDTAHDPVVTLCGHLFCWPCIYKWLHVQLSSVSVDQHQNNCPVCKSNITITSLVPLYGRGMSSPSSTFGSKKQDALSTDIPRRPAPSALRNPITSASSLNPSLQHQTLSPSFHNHQYSPRGFTTTESTDLANAVMMSFLYPVIGMFGDLVYTRIFGTFTNTIAQPYQSQRMMQREKSLNRVSIFFLCCIILCLLLF.

Residues Cys-44–Lys-92 form an RING-type zinc finger. The interval Ser-110–Ala-135 is disordered. The chain crosses the membrane as a helical; Anchor for type IV membrane protein span at residues Lys-223–Phe-243.

As to expression, ubiquitous. Highly expressed in roots.

The protein resides in the endoplasmic reticulum membrane. The catalysed reaction is S-ubiquitinyl-[E2 ubiquitin-conjugating enzyme]-L-cysteine + [acceptor protein]-L-lysine = [E2 ubiquitin-conjugating enzyme]-L-cysteine + N(6)-ubiquitinyl-[acceptor protein]-L-lysine.. It functions in the pathway protein modification; protein ubiquitination. Its function is as follows. E3 ubiquitin-protein ligase. The sequence is that of E3 ubiquitin-protein ligase RMA3 (RMA3) from Arabidopsis thaliana (Mouse-ear cress).